The chain runs to 91 residues: Heat shock protein 30E (91 aa).

The segment at 62-91 (RDQIRQPGAPESEGTSPNTGKDGKDPGNSL) is disordered. The span at 82–91 (KDGKDPGNSL) shows a compositional bias: basic and acidic residues.

The protein belongs to the small heat shock protein (HSP20) family.

The sequence is that of Heat shock protein 30E (hsp30e) from Xenopus laevis (African clawed frog).